The primary structure comprises 817 residues: Two pore calcium channel protein 1 (817 aa).

Residues 1–101 are Cytoplasmic-facing; the sequence is MSVILDDDVL…PKDARALAAY (101 aa). Positions 22-66 are disordered; it reads PLTPSNGLGQEDLPSKNGGGQSGPNSQVPSLVSGADSPPSSPPGH. The helical transmembrane segment at 102–122 threads the bilayer; sequence LFVHNHFFYMMELLTALLLLL. Residues 123 to 137 are Extracellular-facing; the sequence is LSLCESPAVPALKLR. Residues 138-158 form a helical membrane-spanning segment; it reads TYVHATLELFALMVVVFELCM. Topologically, residues 159–172 are cytoplasmic; the sequence is KLRWLGFHTFVRHK. Residues 173–193 form a helical membrane-spanning segment; the sequence is RTMVKTSVLVVQFIEAIVVLV. At 194-202 the chain is on the extracellular side; that stretch reads RQTSHVRVT. Residues 203–221 form a helical membrane-spanning segment; the sequence is RALRCIFLVDCRYCGGVRR. Residues 222–235 lie on the Cytoplasmic side of the membrane; sequence NLRQIFQSLPPFMD. Residues 236–256 form a helical membrane-spanning segment; that stretch reads ILLLLLFFMIIFAILGFYLFS. At 257 to 263 the chain is on the extracellular side; sequence TNPSDPY. Positions 264–287 form an intramembrane region, helical; Pore-forming; the sequence is FNTLENSIVNLFVLLTTANFPDVM. At 288–298 the chain is on the extracellular side; sequence MPSYSRNPWSC. The chain crosses the membrane as a helical span at residues 299–319; it reads VFFIVYLSIELYFIMNLLLAV. The Cytoplasmic segment spans residues 320–445; it reads VFDTFNDIEK…NILVNSKAFQ (126 aa). A helical membrane pass occupies residues 446 to 466; the sequence is YFMYLVVAVNGVWILVETFML. The Extracellular segment spans residues 467–480; that stretch reads KGGNFISKHVPWSY. A helical membrane pass occupies residues 481–501; it reads LVFLTIYGVELFMKVAGLGPV. Over 502–504 the chain is Cytoplasmic; that stretch reads EYL. The chain crosses the membrane as a helical span at residues 505 to 527; sequence SSGWNLFDFSVTAFAFLGLLALT. At 528 to 535 the chain is on the extracellular side; the sequence is LNMEPFYF. The chain crosses the membrane as a helical span at residues 536-550; the sequence is IVVLRPLQLLRLFKL. The Cytoplasmic portion of the chain corresponds to 551 to 574; it reads KKRYRNVLDTMFELLPRMASLGLT. A helical membrane pass occupies residues 575–595; that stretch reads LLTFYYSFAIVGMEFFSGRLS. Over 596 to 630 the chain is Extracellular; it reads PNCCNSSTVADAYRFINHTVGNKTKVEEGYYYLNN. Positions 631-654 form an intramembrane region, helical; Pore-forming; the sequence is FDNILNSFVTLFELTVVNNWYIIM. Residues 655–671 lie on the Extracellular side of the membrane; the sequence is EGVTSQTSHWSRLYFMT. The helical transmembrane segment at 672-692 threads the bilayer; that stretch reads FYIVTMVVMTIIVAFILEAFV. The Cytoplasmic segment spans residues 693-817; sequence FRMNYSRKSQ…GSRQRSQTVT (125 aa). The stretch at 770–794 forms a coiled coil; sequence SLKMYQEEIQEWYEEHAREQEQQQL. The disordered stretch occupies residues 785–817; it reads HAREQEQQQLRGSAPSPAAQQTPGSRQRSQTVT. Residues 802 to 817 show a composition bias toward polar residues; the sequence is AAQQTPGSRQRSQTVT.

This sequence belongs to the calcium channel alpha-1 subunit (TC 1.A.1.11) family. Two pore calcium channel subfamily. Dimer. Interacts with MTOR; the interaction is required for TPCN1 ATP sensitivity. Interacts with STX7, STX8 and STX12. Interacts with JPT2. Found in a complex with LSM12, TPCN1 and TPCN2. Post-translationally, N-glycosylated. In terms of tissue distribution, widely expressed. Expressed at relatively high level in kidney, liver and lung, and in the kidney it is expressed at inner medullary collecting ducts.

The protein resides in the lysosome membrane. The protein localises to the endosome membrane. It is found in the early endosome membrane. Its subcellular location is the recycling endosome membrane. It carries out the reaction Na(+)(in) = Na(+)(out). The enzyme catalyses Ca(2+)(in) = Ca(2+)(out). With respect to regulation, na(+) current is inhibited by ATP in a MTORC-dependent manner. ATP sensitivity is independent of PI(3,5)P2. Probably regulated by Mg(2+) ions, cytosolic Mg(2+) selectively inhibits outward current while lysosomal Mg(2+) modestly inhibits both the outward and inward currents. In the absence of Mg(2+), NAADP readily activates TPCN2, with properties similar to PI(3,5)P2. Both current elicited by PI(3,5)P2 as well as NAADP are inhibited by tetrandrine. In terms of biological role, intracellular channel initially characterized as a non-selective Ca(2+)-permeable channel activated by NAADP (nicotinic acid adenine dinucleotide phosphate), it is also a voltage-gated highly-selective Na(+) channel activated directly by PI(3,5)P2 (phosphatidylinositol 3,5-bisphosphate) that senses pH changes and confers electrical excitability to organelles. Localizes to the early and recycling endosomes membranes where it plays a role in the uptake and processing of proteins and regulates organellar membrane excitability, membrane trafficking and pH homeostasis. Ion selectivity is not fixed but rather agonist-dependent and under defined ionic conditions, can be readily activated by both NAADP and PI(3,5)P2. Required for mTOR-dependent nutrient sensing. The protein is Two pore calcium channel protein 1 (Tpcn1) of Rattus norvegicus (Rat).